Consider the following 75-residue polypeptide: Small ribosomal subunit protein bS18c (75 aa).

Over residues 1–12 the composition is skewed to basic residues; the sequence is MNKSKRSFRRRL. A disordered region spans residues 1–21; that stretch reads MNKSKRSFRRRLPPIGSRDQI.

It belongs to the bacterial ribosomal protein bS18 family. As to quaternary structure, part of the 30S ribosomal subunit.

The protein localises to the plastid. The protein resides in the chloroplast. In Cycas taitungensis (Prince sago), this protein is Small ribosomal subunit protein bS18c.